The primary structure comprises 571 residues: Protein tesmin/TSO1-like CXC 6 (571 aa).

5 disordered regions span residues 1 to 52 (MGEG…AAAS), 92 to 119 (IRHP…QKKK), 293 to 325 (NQGT…GGNA), 370 to 411 (LANQ…RSLS), and 507 to 571 (NGVS…KKDL). A compositionally biased stretch (basic and acidic residues) spans 7 to 16 (GDKFPPKTDE). The CRC domain occupies 117-241 (KKKQCNCKHS…KCLDCKNFEG (125 aa)). Composition is skewed to polar residues over residues 293–319 (NQGT…QTGS), 373–388 (QKET…QGHV), and 508–539 (GVSQ…QTAK). Residues 540 to 557 (QPSQLTTTTTTPNTSSQT) show a composition bias toward low complexity.

Belongs to the lin-54 family. As to expression, ubiquitous but expressed mostly in flowers.

Its subcellular location is the nucleus. Its function is as follows. Plays a role in development of both male and female reproductive tissues. This chain is Protein tesmin/TSO1-like CXC 6 (TCX6), found in Arabidopsis thaliana (Mouse-ear cress).